The following is a 98-amino-acid chain: U-megalopygitoxin(1)-Mo1 (98 aa).

The N-terminal stretch at 1–17 is a signal peptide; the sequence is MYRETFVFCVLLAVVSA.

It belongs to the caterpillar 1 family. Post-translationally, contains 4 disulfide bonds. In terms of tissue distribution, expressed by the venom apparatus.

It localises to the secreted. Functionally, probable toxin. This Megalopyge opercularis (Southern flannel moth) protein is U-megalopygitoxin(1)-Mo1.